The chain runs to 214 residues: pH-sensitive calcium channel (214 aa).

Residues 1-15 lie on the Cytoplasmic side of the membrane; sequence MQATVHESKQSIMQR. The helical transmembrane segment at 16–37 threads the bilayer; that stretch reads ILTVFVFTLLIATVGLFIGQFV. At 38–44 the chain is on the extracellular side; that stretch reads PVALMLP. A helical transmembrane segment spans residues 45-59; the sequence is LSILEVAMIILAFWM. The Cytoplasmic segment spans residues 60 to 66; it reads RRRKAVG. The chain crosses the membrane as a helical span at residues 67–86; it reads YAFVYTFAFVSGITLFPIVS. Residues 87–95 are Extracellular-facing; it reads HYASIAGAY. The helical transmembrane segment at 96–117 threads the bilayer; the sequence is VVLEAFGSTFVIFAVLGTIGAK. At 118 to 122 the chain is on the cytoplasmic side; sequence MKKDL. The chain crosses the membrane as a helical span at residues 123–146; the sequence is SFLWSFLLVAVLALAVVGIFNIFS. The Extracellular segment spans residues 147-151; it reads PLNSA. Residues 152–175 form a helical membrane-spanning segment; the sequence is AMMAYSVIGTIVFSLYILYDLNQI. At 176–185 the chain is on the cytoplasmic side; the sequence is KHRHITEDLI. The chain crosses the membrane as a helical span at residues 186-207; the sequence is PVMALSLYLDFINLFINLLRFF. The Extracellular segment spans residues 208 to 214; the sequence is GILSSDD.

The protein belongs to the BI1 family. Monomer.

Its subcellular location is the cell membrane. It carries out the reaction Ca(2+)(in) = Ca(2+)(out). Its activity is regulated as follows. The calcium-release activity is mediated by two factors: pH and transmembrane ion gradient. It was proposed, based on an MD simulation, that the conserved aspartyl dyad (Asp-171-Asp-195) regulates Ca(2+) binding, pH sensing, and the channel pore opening and closing, and that protonation of Asp-171 probably weakens its interaction with Arg-60, facilitating the opening of the channel. Another study using nanodiscs suggests that Asp-171 is not a pH sensor regulating the pore dynamics; instead, it is only involved in the gating of calcium ions. When crystallized in detergents at different pH conditions, the transition between open and closed conformations is regulated by pH. Ca(2+) binding is inhibited by Na(+), K(+), Li(+), Yb(3+) and Lu(3+), but not by Mg(2+) and Mn(2+). Its function is as follows. Calcium channel that probably plays a role in the regulation of calcium homeostasis. Uptakes calcium ions and mediates calcium flux in proteoliposomes in a pH-dependent manner. When expressed in E.coli in the presence of high extracellular calcium concentrations, shows calcium-leak activity, increasing intracellular calcium concentration. It can also mediate Ca(2+) flux from the endoplamic reticulum (ER) when expressed in permeabilized mammalian cells. Calcium transport activity is also detected in ER-like lipid vesicles. The protein is pH-sensitive calcium channel of Bacillus subtilis (strain 168).